We begin with the raw amino-acid sequence, 397 residues long: Elongation factor Tu (397 aa).

The tr-type G domain maps to 10 to 206 (KPHVNIGTIG…AVDASIPEPE (197 aa)). The segment at 19–26 (GHIDHGKT) is G1. 19–26 (GHIDHGKT) is a GTP binding site. Thr-26 serves as a coordination point for Mg(2+). The G2 stretch occupies residues 62 to 66 (GITIS). Positions 83–86 (DCPG) are G3. Residues 83–87 (DCPGH) and 138–141 (NKAD) each bind GTP. The segment at 138–141 (NKAD) is G4. The G5 stretch occupies residues 176–178 (SAL).

This sequence belongs to the TRAFAC class translation factor GTPase superfamily. Classic translation factor GTPase family. EF-Tu/EF-1A subfamily. As to quaternary structure, monomer.

It localises to the cytoplasm. The catalysed reaction is GTP + H2O = GDP + phosphate + H(+). GTP hydrolase that promotes the GTP-dependent binding of aminoacyl-tRNA to the A-site of ribosomes during protein biosynthesis. The sequence is that of Elongation factor Tu from Parafrankia sp. (strain EAN1pec).